A 755-amino-acid polypeptide reads, in one-letter code: MPPFLLLEAVCVFLFSRVPPSLPLQEVHVSKETIGKISAASKMMWCSAAVDIMFLLDGSNSVGKGSFERSKHFAITVCDGLDISPERVRVGAFQFSSTPHLEFPLDSFSTQQEVKARIKRMVFKGGRTETELALKYLLHRGLPGGRNASVPQILIIVTDGKSQGDVALPSKQLKERGVTVFAVGVRFPRWEELHALASEPRGQHVLLAEQVEDATNGLFSTLSSSAICSSATPDCRVEAHPCEHRTLEMVREFAGNAPCWRGSRRTLAVLAAHCPFYSWKRVFLTHPATCYRTTCPGPCDSQPCQNGGTCVPEGLDGYQCLCPLAFGGEANCALKLSLECRVDLLFLLDSSAGTTLDGFLRAKVFVKRFVRAVLSEDSRARVGVATYSRELLVAVPVGEYQDVPDLVWSLDGIPFRGGPTLTGSALRQAAERGFGSATRTGQDRPRRVVVLLTESHSEDEVAGPARHARARELLLLGVGSEAVRAELEEITGSPKHVMVYSDPQDLFNQIPELQGKLCSRQRPGCRTQALDLVFMLDTSASVGPENFAQMQSFVRSCALQFEVNPDVTQVGLVVYGSQVQTAFGLDTKPTRAAMLRAISQAPYLGGVGSAGTALLHIYDKVMTVQRGARPGVPKAVVVLTGGRGAEDAAVPAQKLRNNGISVLVVGVGPVLSEGLRRLAGPRDSLIHVAAYADLRYHQDVLIEWLCGEAKQPVNLCKPSPCMNEGSCVLQNGSYRCKCRDGWEGPHCENRFLRRP.

An N-terminal signal peptide occupies residues 1-23 (MPPFLLLEAVCVFLFSRVPPSLP). Positions 51-222 (DIMFLLDGSN…DATNGLFSTL (172 aa)) constitute a VWFA 1 domain. N-linked (GlcNAc...) asparagine glycosylation occurs at Asn-147. Positions 296-333 (PGPCDSQPCQNGGTCVPEGLDGYQCLCPLAFGGEANCA) constitute an EGF-like 1 domain. Cystine bridges form between Cys-299-Cys-310, Cys-304-Cys-320, and Cys-322-Cys-332. 2 consecutive VWFA domains span residues 343–517 (DLLF…QGKL) and 531–705 (DLVF…IEWL). An EGF-like 2 domain is found at 712–748 (PVNLCKPSPCMNEGSCVLQNGSYRCKCRDGWEGPHCE). 3 cysteine pairs are disulfide-bonded: Cys-716/Cys-727, Cys-721/Cys-736, and Cys-738/Cys-747.

Forms monomers and multimers. In terms of processing, a 55 kDa form is produced by proteolytic cleavage. As to expression, expression is generally absent in normal colon and other normal body tissues, but it is induced an average of 78-fold in Stage II, III, and IV colon cancers, as well as in colon adenomas and colon cancer cell lines.

It localises to the secreted. This is von Willebrand factor A domain-containing protein 2 (VWA2) from Homo sapiens (Human).